Reading from the N-terminus, the 416-residue chain is Formyl-CoA:oxalate CoA-transferase (416 aa).

CoA is bound by residues 17–18 (QS), Arg-38, 72–75 (LNTK), 96–98 (NFH), His-104, and 137–140 (KAYE). Asp-169 acts as the Nucleophile in catalysis. Residue 248-250 (GGQ) participates in substrate binding. Residue 273–275 (QEQ) participates in CoA binding.

It belongs to the CoA-transferase III family. Frc subfamily. Homodimer.

It catalyses the reaction formyl-CoA + oxalate = oxalyl-CoA + formate. It participates in metabolic intermediate degradation; oxalate degradation; CO(2) and formate from oxalate: step 1/2. In terms of biological role, involved in the catabolism of oxalate and in the adapatation to low pH via the induction of the oxalate-dependent acid tolerance response (ATR). Catalyzes the transfer of the CoA moiety from formyl-CoA to oxalate. This chain is Formyl-CoA:oxalate CoA-transferase, found in Escherichia coli O17:K52:H18 (strain UMN026 / ExPEC).